The sequence spans 354 residues: Ribosomal RNA large subunit methyltransferase M (354 aa).

S-adenosyl-L-methionine contacts are provided by residues Ser-183, Ser-216–Gly-219, Asp-235, Asp-255, and Asp-271. The active-site Proton acceptor is Lys-300.

This sequence belongs to the class I-like SAM-binding methyltransferase superfamily. RNA methyltransferase RlmE family. RlmM subfamily. In terms of assembly, monomer.

It localises to the cytoplasm. It catalyses the reaction cytidine(2498) in 23S rRNA + S-adenosyl-L-methionine = 2'-O-methylcytidine(2498) in 23S rRNA + S-adenosyl-L-homocysteine + H(+). Functionally, catalyzes the 2'-O-methylation at nucleotide C2498 in 23S rRNA. The sequence is that of Ribosomal RNA large subunit methyltransferase M from Pseudomonas putida (strain GB-1).